The following is a 605-amino-acid chain: Condensin-2 complex subunit H2 (605 aa).

At threonine 19 the chain carries Phosphothreonine. Phosphoserine is present on residues serine 95, serine 200, serine 208, serine 228, and serine 232. The disordered stretch occupies residues 194–331; sequence LEPEGMSPME…PFDSLESKPF (138 aa). Positions 256 to 266 are enriched in acidic residues; sequence GEDEDAEEAVE. A phosphoserine mark is found at serine 282, serine 284, serine 466, and serine 492.

It belongs to the CND2 H2 (condensin-2 subunit 2) family. Component of the condensin-2 complex, which contains the SMC2 and SMC4 heterodimer, and three non SMC subunits, NCAPG2, NCAPH2 and NCAPD3 that probably regulate the complex.

It is found in the nucleus. It localises to the chromosome. In terms of biological role, regulatory subunit of the condensin-2 complex, a complex that seems to provide chromosomes with an additional level of organization and rigidity and in establishing mitotic chromosome architecture. May promote the resolution of double-strand DNA catenanes (intertwines) between sister chromatids. Condensin-mediated compaction likely increases tension in catenated sister chromatids, providing directionality for type II topoisomerase-mediated strand exchanges toward chromatid decatenation. Required for decatenation of chromatin bridges at anaphase. Early in neurogenesis, may play an essential role to ensure accurate mitotic chromosome condensation in neuron stem cells, ultimately affecting neuron pool and cortex size. Seems to have lineage-specific role in T-cell development. This chain is Condensin-2 complex subunit H2 (NCAPH2), found in Homo sapiens (Human).